The following is a 181-amino-acid chain: MKTIEVDDELYSYIASHTKHIGESASDILRRMLKFSAASQPAAPVTKEVRVASPAIVEAKPVKTIKDKVRAMRELLLSDEYAEQKRAVNRFMLLLSTLYSLDAQAFAEATESLHGRTRVYFAADEQTLLKNGNQTKPKHVSGTPYWVITNTNTGRKCSMIEHIMLSMQFPAELIEKVCGTI.

Interaction with DNA regions lie at residues 87–88, 116–120, and 150–156; these read AV, RTRVY, and NTNTGRK.

Belongs to the SeqA family. Homodimer. Polymerizes to form helical filaments.

Its subcellular location is the cytoplasm. Negative regulator of replication initiation, which contributes to regulation of DNA replication and ensures that replication initiation occurs exactly once per chromosome per cell cycle. Binds to pairs of hemimethylated GATC sequences in the oriC region, thus preventing assembly of replication proteins and re-initiation at newly replicated origins. Repression is relieved when the region becomes fully methylated. In Shigella dysenteriae serotype 1 (strain Sd197), this protein is Negative modulator of initiation of replication.